A 113-amino-acid polypeptide reads, in one-letter code: U11-theraphotoxin-Hhn1m (113 aa).

A signal peptide spans 1–21 (MNTVRGTFLLVFGLAASLGQA). Positions 22–74 (DKNENRREMQKKTEQGKSYLNFAENLLLQKLEELEAKLLEKHSKKSKNSRQKR) are excised as a propeptide. 3 disulfides stabilise this stretch: Cys-75–Cys-90, Cys-82–Cys-95, and Cys-89–Cys-110.

It belongs to the neurotoxin 14 (magi-1) family. 01 (HNTX-16) subfamily. As to expression, expressed by the venom gland.

Its subcellular location is the secreted. Functionally, probable ion channel inhibitor. The chain is U11-theraphotoxin-Hhn1m from Cyriopagopus hainanus (Chinese bird spider).